The sequence spans 496 residues: WD repeat-containing protein 37 (496 aa).

Composition is skewed to polar residues over residues 1–13 and 22–31; these read MPTE…TARQ and SLSIRRTNSS. The segment at 1 to 50 is disordered; that stretch reads MPTESGSCSTARQAKQKRKSHSLSIRRTNSSEQERTGLPREMLEGQDSKL. Basic and acidic residues predominate over residues 32–47; that stretch reads EQERTGLPREMLEGQD. WD repeat units lie at residues 154–194 and 197–236; these read GHRD…CLVK and GHVG…PTPQ. Residues 238–267 form a disordered region; that stretch reads VADTSQQISGEDEIECSDKDEPDIDGDVSS. Positions 247–265 are enriched in acidic residues; that stretch reads GEDEIECSDKDEPDIDGDV. WD repeat units follow at residues 281–320, 323–362, 367–405, 408–447, and 454–495; these read SHQG…LVHS, GHDQ…IHSV, GHTD…SPIA, RTDS…LARL, and GHRR…LLQE.

Forms homodimers. Interacts with PACS1. Interacts with PACS2.

Its subcellular location is the cytoplasm. The protein localises to the nucleus. Functionally, required for normal ER Ca2+ handling in lymphocytes. Together with PACS1, it plays an essential role in stabilizing peripheral lymphocyte populations. The sequence is that of WD repeat-containing protein 37 (Wdr37) from Mus musculus (Mouse).